Consider the following 190-residue polypeptide: UPF0200 protein MTH_434 (190 aa).

10 to 17 is a binding site for ATP; sequence GMPGAGKG.

Belongs to the UPF0200 family.

The polypeptide is UPF0200 protein MTH_434 (Methanothermobacter thermautotrophicus (strain ATCC 29096 / DSM 1053 / JCM 10044 / NBRC 100330 / Delta H) (Methanobacterium thermoautotrophicum)).